Here is a 101-residue protein sequence, read N- to C-terminus: MAKQSMKARDVKRVKLAEKFYAQRVELKRIISDVNSSDEERWDAVLKLQTLPRDSSPSRQRNRCSQTGRPHGVLRKFGLSRIKVREAAMRGEIPGLKKASW.

The tract at residues 51 to 70 is disordered; the sequence is LPRDSSPSRQRNRCSQTGRP. Residues 52–68 are compositionally biased toward polar residues; the sequence is PRDSSPSRQRNRCSQTG.

Belongs to the universal ribosomal protein uS14 family. Part of the 30S ribosomal subunit. Contacts proteins S3 and S10.

In terms of biological role, binds 16S rRNA, required for the assembly of 30S particles and may also be responsible for determining the conformation of the 16S rRNA at the A site. In Mannheimia succiniciproducens (strain KCTC 0769BP / MBEL55E), this protein is Small ribosomal subunit protein uS14.